Consider the following 146-residue polypeptide: UPF0178 protein R01393 (146 aa).

This sequence belongs to the UPF0178 family.

In Rhizobium meliloti (strain 1021) (Ensifer meliloti), this protein is UPF0178 protein R01393.